The sequence spans 360 residues: Protein RecA (360 aa).

64–71 (GHESSGKT) is a binding site for ATP. A disordered region spans residues 333–360 (QEQVQPEPKSKQSKSKQASEQATQDELI).

The protein belongs to the RecA family.

The protein localises to the cytoplasm. In terms of biological role, can catalyze the hydrolysis of ATP in the presence of single-stranded DNA, the ATP-dependent uptake of single-stranded DNA by duplex DNA, and the ATP-dependent hybridization of homologous single-stranded DNAs. It interacts with LexA causing its activation and leading to its autocatalytic cleavage. This is Protein RecA from Francisella philomiragia subsp. philomiragia (strain ATCC 25017 / CCUG 19701 / FSC 153 / O#319-036).